We begin with the raw amino-acid sequence, 470 residues long: ESX-4 secretion system ATPase EccB4 (470 aa).

A helical membrane pass occupies residues 44–64; it reads LALGCVLAIVAAMGCAFVALL.

Belongs to the EccB family. As to quaternary structure, part of the ESX-4 / type VII secretion system (T7SS), which is composed of cytosolic and membrane components.

It localises to the cell membrane. Functionally, an ATPase. This is ESX-4 secretion system ATPase EccB4 (eccB4) from Mycobacterium tuberculosis (strain CDC 1551 / Oshkosh).